The following is a 1093-amino-acid chain: Protein translocase subunit SecA (1093 aa).

ATP is bound by residues Q84, 102–106 (GEGKT), and D491. Disordered stretches follow at residues 837–869 (QNLQ…SEHE) and 904–1062 (SELE…TSEA). Composition is skewed to basic and acidic residues over residues 904–937 (SELE…DATK), 944–971 (EELK…EKLK), and 978–1062 (PKDL…TSEA).

The protein belongs to the SecA family. As to quaternary structure, monomer and homodimer. Part of the essential Sec protein translocation apparatus which comprises SecA, SecYEG and auxiliary proteins SecDF. Other proteins may also be involved.

The protein resides in the cell membrane. It is found in the cytoplasm. The catalysed reaction is ATP + H2O + cellular proteinSide 1 = ADP + phosphate + cellular proteinSide 2.. Part of the Sec protein translocase complex. Interacts with the SecYEG preprotein conducting channel. Has a central role in coupling the hydrolysis of ATP to the transfer of proteins into and across the cell membrane, serving as an ATP-driven molecular motor driving the stepwise translocation of polypeptide chains across the membrane. The sequence is that of Protein translocase subunit SecA from Mycoplasmopsis synoviae (strain 53) (Mycoplasma synoviae).